Consider the following 48-residue polypeptide: MASDLLCCPGGTDRFDHERTGPGPAAVSTEQFVWGRMKSAVPLGAPRD.

This sequence belongs to the PhoAT antitoxin family. In terms of assembly, interacts with toxin PhoH2.

Probable antitoxin component of a type II toxin-antitoxin (TA) system. The probable cognate antitoxin is PhoAT; the toxin gene can be expressed in the absence of the antitoxin gene in M.smegmatis strain mc(2)155. The sequence is that of Probable antitoxin PhoAT from Mycolicibacterium smegmatis (strain ATCC 700084 / mc(2)155) (Mycobacterium smegmatis).